A 157-amino-acid chain; its full sequence is Arginine repressor (157 aa).

This sequence belongs to the ArgR family.

Its subcellular location is the cytoplasm. Its pathway is amino-acid biosynthesis; L-arginine biosynthesis [regulation]. In terms of biological role, regulates arginine biosynthesis genes. The chain is Arginine repressor from Lactobacillus delbrueckii subsp. bulgaricus (strain ATCC 11842 / DSM 20081 / BCRC 10696 / JCM 1002 / NBRC 13953 / NCIMB 11778 / NCTC 12712 / WDCM 00102 / Lb 14).